A 177-amino-acid polypeptide reads, in one-letter code: Adenine phosphoribosyltransferase (177 aa).

The protein belongs to the purine/pyrimidine phosphoribosyltransferase family. In terms of assembly, homodimer.

It is found in the cytoplasm. The catalysed reaction is AMP + diphosphate = 5-phospho-alpha-D-ribose 1-diphosphate + adenine. It functions in the pathway purine metabolism; AMP biosynthesis via salvage pathway; AMP from adenine: step 1/1. Functionally, catalyzes a salvage reaction resulting in the formation of AMP, that is energically less costly than de novo synthesis. In Chlorobium luteolum (strain DSM 273 / BCRC 81028 / 2530) (Pelodictyon luteolum), this protein is Adenine phosphoribosyltransferase.